The following is a 264-amino-acid chain: MSWGGFKKAINRAGASVIVKDVDKTMDKDFDVEERRYKTLKTAGTNLQKAAKGYLDNIRAITNSQVTIAEIIYNLYEESKQGQSLYSNVGTYYMQSVKEFDEETVKQIDGPYRETVLDPIGKFSNYFSEIDEAIKKRAHKKIDYEQCKAKVRRLVDKPAKDAAKLPRAEKELSMAKEIYDELNDQLKAELPQLIALRVPFYDPSFEALVKIQLRFCTEGYSRLAQIQQYLDPASRDEYANGLLDGKIDDMLAQMQGLSITSLGK.

The BAR domain occupies 15–239; sequence ASVIVKDVDK…LDPASRDEYA (225 aa).

The protein resides in the cytoplasm. It is found in the cytoskeleton. Component of a cytoskeletal structure that is required for the formation of endocytic vesicles at the plasma membrane level. Plays an important role in virulence. The sequence is that of Regulator of cytoskeleton and endocytosis RVS161 (RVS161) from Candida albicans (strain SC5314 / ATCC MYA-2876) (Yeast).